The following is an 88-amino-acid chain: Phosphocarrier protein HPr (88 aa).

The HPr domain maps to 1-88 (MEQASFVVID…EVLKKEGLAE (88 aa)). His15 functions as the Pros-phosphohistidine intermediate in the catalytic mechanism. Ser46 bears the Phosphoserine; by HPrK/P mark.

Belongs to the HPr family.

The protein localises to the cytoplasm. With respect to regulation, phosphorylation on Ser-46 inhibits the phosphoryl transfer from enzyme I to HPr. Functionally, general (non sugar-specific) component of the phosphoenolpyruvate-dependent sugar phosphotransferase system (sugar PTS). This major carbohydrate active-transport system catalyzes the phosphorylation of incoming sugar substrates concomitantly with their translocation across the cell membrane. The phosphoryl group from phosphoenolpyruvate (PEP) is transferred to the phosphoryl carrier protein HPr by enzyme I. Phospho-HPr then transfers it to the PTS EIIA domain. In terms of biological role, P-Ser-HPr interacts with the catabolite control protein A (CcpA), forming a complex that binds to DNA at the catabolite response elements cre, operator sites preceding a large number of catabolite-regulated genes. Thus, P-Ser-HPr is a corepressor in carbon catabolite repression (CCR), a mechanism that allows bacteria to coordinate and optimize the utilization of available carbon sources. P-Ser-HPr also plays a role in inducer exclusion, in which it probably interacts with several non-PTS permeases and inhibits their transport activity. The polypeptide is Phosphocarrier protein HPr (ptsH) (Listeria monocytogenes serovar 1/2a (strain ATCC BAA-679 / EGD-e)).